Here is a 257-residue protein sequence, read N- to C-terminus: 4-chloro-allylglycine synthase (257 aa).

Glu112, His119, Glu173, His203, Glu207, and His210 together coordinate Fe cation.

The cofactor is Fe(2+).

It catalyses the reaction 4-chloro-L-lysine + AH2 + O2 = L-2-amino-4-chloropent-4-enoate + formaldehyde + A + NH4(+) + H2O. It functions in the pathway amino-acid metabolism. It participates in antibiotic biosynthesis. In terms of biological role, involved in the biosynthesis of terminal alkyne-containing amino acids such as L-propargylglycine (Pra) and L-beta-ethynylserine, that are produced as antibiotics by S.cattleya. Catalyzes an oxidative C-C bond cleavage in 4-chloro-L-lysine to form 4-chloro-allyl-L-glycine (also named L-2-amino-4-chloropent-4-enoate), with release of formaldehyde and ammonia. Is also able to react with L-lysine directly to produce allylglycine in vitro. This chain is 4-chloro-allylglycine synthase, found in Streptantibioticus cattleyicolor (strain ATCC 35852 / DSM 46488 / JCM 4925 / NBRC 14057 / NRRL 8057) (Streptomyces cattleya).